The chain runs to 428 residues: Serine--tRNA ligase (428 aa).

235 to 237 contributes to the L-serine binding site; it reads TAE. Residue 266 to 268 participates in ATP binding; the sequence is RSE. Glutamate 289 contacts L-serine. 353–356 serves as a coordination point for ATP; that stretch reads EISS. Position 389 (serine 389) interacts with L-serine.

This sequence belongs to the class-II aminoacyl-tRNA synthetase family. Type-1 seryl-tRNA synthetase subfamily. Homodimer. The tRNA molecule binds across the dimer.

It localises to the cytoplasm. The catalysed reaction is tRNA(Ser) + L-serine + ATP = L-seryl-tRNA(Ser) + AMP + diphosphate + H(+). It carries out the reaction tRNA(Sec) + L-serine + ATP = L-seryl-tRNA(Sec) + AMP + diphosphate + H(+). Its pathway is aminoacyl-tRNA biosynthesis; selenocysteinyl-tRNA(Sec) biosynthesis; L-seryl-tRNA(Sec) from L-serine and tRNA(Sec): step 1/1. Its function is as follows. Catalyzes the attachment of serine to tRNA(Ser). Is also able to aminoacylate tRNA(Sec) with serine, to form the misacylated tRNA L-seryl-tRNA(Sec), which will be further converted into selenocysteinyl-tRNA(Sec). The sequence is that of Serine--tRNA ligase from Shewanella sp. (strain ANA-3).